A 269-amino-acid chain; its full sequence is WW domain-binding protein 1 (269 aa).

2 consecutive short sequence motifs (PPxY motif) follow at residues 124-127 (PPAY) and 137-141 (PPPPY). 2 disordered regions span residues 169–203 (EGTN…PPSC) and 249–269 (PPES…GDIP). The segment covering 174-183 (EGVSSHQSAP) has biased composition (polar residues).

As to quaternary structure, interacts with NEDD4. Binds to the WW domain of YAP1, WWP1 and WWP2. Interacts with WWOX. Expressed in most tissues but at significantly lower levels in placenta, lung, liver, and kidney.

The sequence is that of WW domain-binding protein 1 (WBP1) from Homo sapiens (Human).